The chain runs to 132 residues: Minor structural pilin EpdB (132 aa).

Residues 1 to 4 constitute a propeptide that is removed on maturation; that stretch reads MSKG. The QXSXEXXXL motif lies at 9-19; it reads EFIVLFLALLV.

Post-translationally, the N-terminus is probably cleaved by the prepilin peptidase EppA, which recognizes the class III signal sequence.

It is found in the secreted. It localises to the cell surface. Its subcellular location is the fimbrium. Functionally, minor component of the type IV-like pili. Essential for pili formation. This is Minor structural pilin EpdB from Methanococcus maripaludis (strain DSM 14266 / JCM 13030 / NBRC 101832 / S2 / LL).